The chain runs to 324 residues: Beta-ketoacyl-[acyl-carrier-protein] synthase III (324 aa).

Active-site residues include cysteine 113 and histidine 251. Residues 252 to 256 (QANKR) form an ACP-binding region. Residue asparagine 281 is part of the active site.

Belongs to the thiolase-like superfamily. FabH family. Homodimer.

Its subcellular location is the cytoplasm. It carries out the reaction malonyl-[ACP] + acetyl-CoA + H(+) = 3-oxobutanoyl-[ACP] + CO2 + CoA. Its pathway is lipid metabolism; fatty acid biosynthesis. Catalyzes the condensation reaction of fatty acid synthesis by the addition to an acyl acceptor of two carbons from malonyl-ACP. Catalyzes the first condensation reaction which initiates fatty acid synthesis and may therefore play a role in governing the total rate of fatty acid production. Possesses both acetoacetyl-ACP synthase and acetyl transacylase activities. Its substrate specificity determines the biosynthesis of branched-chain and/or straight-chain of fatty acids. This Bartonella henselae (strain ATCC 49882 / DSM 28221 / CCUG 30454 / Houston 1) (Rochalimaea henselae) protein is Beta-ketoacyl-[acyl-carrier-protein] synthase III.